Reading from the N-terminus, the 353-residue chain is MAADGDWQDFYEFQEPARSLLDQENCNASPEPGAEAGAEAGGGADGFPAPACSLEEKLSLCFRPSDPGAEPPRTAVRPITERSLLQGDEIWNALTDNYGNVMPVDWKSSHTRTLHLLTLNLSEKGVSDSLLFDTSDDEELREQLDMHSIIVSCVNDEPLFTADQVIEEIEEMMQESPDPEDDETPTQSDRLSMLSQEIQTLKRSSTGSYEERVKRLSVSELNEILEEIETAIKEYSEELVQQLALRDELEFEKEVKNSFISVLIEVQNKQKEHKETAKKKKKLKNGSSQNGKNERSHMPGTYLTTVIPYEKKNGPPSVEDLQILTKILRAMKEDSEKVPSLLTDYILKVLCPT.

Residues 19–49 (SLLDQENCNASPEPGAEAGAEAGGGADGFPA) are disordered. The span at 28–38 (ASPEPGAEAGA) shows a compositional bias: low complexity. A phosphoserine mark is found at Ser135, Ser176, and Ser195. The stretch at 214–286 (KRLSVSELNE…AKKKKKLKNG (73 aa)) forms a coiled coil. A disordered region spans residues 271-300 (KEHKETAKKKKKLKNGSSQNGKNERSHMPG).

This sequence belongs to the zygin family. As to quaternary structure, homodimer; disulfide-linked. May form heterodimers with FEZ1. Interacts with synaptotagmin. In terms of tissue distribution, expressed in nonneural tissues, such as heart, lung, spleen, muscle, testis, placenta and melanocytes.

Its function is as follows. Involved in axonal outgrowth and fasciculation. This Homo sapiens (Human) protein is Fasciculation and elongation protein zeta-2 (FEZ2).